A 510-amino-acid polypeptide reads, in one-letter code: Arginine biosynthesis bifunctional protein ArgJ, mitochondrial (510 aa).

Over residues 57 to 70 (TSTNEPSAATTNVP) the composition is skewed to polar residues. Positions 57 to 76 (TSTNEPSAATTNVPHPQEAP) are disordered. Threonine 222, lysine 248, threonine 267, and glutamate 364 together coordinate substrate. Threonine 267 acts as the Nucleophile in catalysis.

It belongs to the ArgJ family. Heterodimer of an alpha and a beta chain. Post-translationally, the alpha and beta chains are autoproteolytically processed from a single precursor protein within the mitochondrion.

The protein resides in the mitochondrion matrix. It catalyses the reaction N(2)-acetyl-L-ornithine + L-glutamate = N-acetyl-L-glutamate + L-ornithine. The catalysed reaction is L-glutamate + acetyl-CoA = N-acetyl-L-glutamate + CoA + H(+). It functions in the pathway amino-acid biosynthesis; L-arginine biosynthesis; L-ornithine and N-acetyl-L-glutamate from L-glutamate and N(2)-acetyl-L-ornithine (cyclic): step 1/1. It participates in amino-acid biosynthesis; L-arginine biosynthesis; N(2)-acetyl-L-ornithine from L-glutamate: step 1/4. Functionally, catalyzes two activities which are involved in the cyclic version of arginine biosynthesis: the synthesis of acetylglutamate from glutamate and acetyl-CoA, and of ornithine by transacetylation between acetylornithine and glutamate. The protein is Arginine biosynthesis bifunctional protein ArgJ, mitochondrial of Malassezia globosa (strain ATCC MYA-4612 / CBS 7966) (Dandruff-associated fungus).